The chain runs to 149 residues: Early lymphoid activation gene protein (149 aa).

In terms of tissue distribution, expressed in heart, kidney, lung, and skeletal muscle, with lower levels in pancreas and liver.

Functionally, may function as an early signal that helps mediate the activation of T-cells. The polypeptide is Early lymphoid activation gene protein (DIAPH2-AS1) (Homo sapiens (Human)).